Consider the following 205-residue polypeptide: Thiamine-phosphate synthase (205 aa).

4-amino-2-methyl-5-(diphosphooxymethyl)pyrimidine-binding positions include 35–39 and N67; that span reads QYRDK. Mg(2+) contacts are provided by D68 and D86. T105 is a binding site for 4-amino-2-methyl-5-(diphosphooxymethyl)pyrimidine. Residue 132–134 coordinates 2-[(2R,5Z)-2-carboxy-4-methylthiazol-5(2H)-ylidene]ethyl phosphate; the sequence is SLT. K135 is a binding site for 4-amino-2-methyl-5-(diphosphooxymethyl)pyrimidine. Residue G162 coordinates 2-[(2R,5Z)-2-carboxy-4-methylthiazol-5(2H)-ylidene]ethyl phosphate.

Belongs to the thiamine-phosphate synthase family. Requires Mg(2+) as cofactor.

The enzyme catalyses 2-[(2R,5Z)-2-carboxy-4-methylthiazol-5(2H)-ylidene]ethyl phosphate + 4-amino-2-methyl-5-(diphosphooxymethyl)pyrimidine + 2 H(+) = thiamine phosphate + CO2 + diphosphate. The catalysed reaction is 2-(2-carboxy-4-methylthiazol-5-yl)ethyl phosphate + 4-amino-2-methyl-5-(diphosphooxymethyl)pyrimidine + 2 H(+) = thiamine phosphate + CO2 + diphosphate. It catalyses the reaction 4-methyl-5-(2-phosphooxyethyl)-thiazole + 4-amino-2-methyl-5-(diphosphooxymethyl)pyrimidine + H(+) = thiamine phosphate + diphosphate. It functions in the pathway cofactor biosynthesis; thiamine diphosphate biosynthesis; thiamine phosphate from 4-amino-2-methyl-5-diphosphomethylpyrimidine and 4-methyl-5-(2-phosphoethyl)-thiazole: step 1/1. Condenses 4-methyl-5-(beta-hydroxyethyl)thiazole monophosphate (THZ-P) and 2-methyl-4-amino-5-hydroxymethyl pyrimidine pyrophosphate (HMP-PP) to form thiamine monophosphate (TMP). The protein is Thiamine-phosphate synthase of Pseudomonas syringae pv. syringae (strain B728a).